The primary structure comprises 208 residues: Inner membrane-spanning protein YciB (208 aa).

The next 5 helical transmembrane spans lie at 49-69 (APVLLATVVVIVATLAQILWL), 78-98 (TMLWVSLALVTALGSATIYFH), 105-125 (WKPTVLYWVMGASLLVGELVF), 150-170 (FSWVAFFAAMGCLNLWVAFNF), and 178-198 (FKLFGGMGLMLVFVLAQAFFL).

It belongs to the YciB family.

Its subcellular location is the cell inner membrane. Functionally, plays a role in cell envelope biogenesis, maintenance of cell envelope integrity and membrane homeostasis. In Polaromonas naphthalenivorans (strain CJ2), this protein is Inner membrane-spanning protein YciB.